A 166-amino-acid polypeptide reads, in one-letter code: Peptide deformylase (166 aa).

Fe cation is bound by residues Cys88 and His130. Glu131 is a catalytic residue. His134 is a binding site for Fe cation.

The protein belongs to the polypeptide deformylase family. The cofactor is Fe(2+).

The enzyme catalyses N-terminal N-formyl-L-methionyl-[peptide] + H2O = N-terminal L-methionyl-[peptide] + formate. Functionally, removes the formyl group from the N-terminal Met of newly synthesized proteins. Requires at least a dipeptide for an efficient rate of reaction. N-terminal L-methionine is a prerequisite for activity but the enzyme has broad specificity at other positions. In Caldicellulosiruptor bescii (strain ATCC BAA-1888 / DSM 6725 / KCTC 15123 / Z-1320) (Anaerocellum thermophilum), this protein is Peptide deformylase.